The sequence spans 700 residues: Mitosis inducer protein blt1 (700 aa).

2 stretches are compositionally biased toward polar residues: residues 1 to 11 (MSKSAFTSKSQ) and 43 to 53 (PRSTALPNLSN). Disordered regions lie at residues 1 to 53 (MSKS…NLSN) and 266 to 293 (TNNR…SKDQ). Low complexity predominate over residues 273–284 (GSDGSNSNFNGG). Residues 496–575 (SVALDDHNRQ…LNMLQKLSMQ (80 aa)) are a coiled coil. Disordered stretches follow at residues 634-659 (FSSF…RKPS) and 671-700 (SSGS…SSKM). Serine 636 is modified (phosphoserine).

In terms of assembly, interacts with cdr2, mid1 and sad1.

It is found in the cytoplasm. The protein localises to the cytoskeleton. In terms of biological role, at the onset of mitosis, forms a medial ring structure before the arrangement of the medial actin ring. Essential for the central positioning of the division septum before the cell divides. The polypeptide is Mitosis inducer protein blt1 (blt1) (Schizosaccharomyces pombe (strain 972 / ATCC 24843) (Fission yeast)).